Here is a 443-residue protein sequence, read N- to C-terminus: Trigger factor (443 aa).

The PPIase FKBP-type domain occupies 161-246 (ADGVTITYHG…VISVTAPRLP (86 aa)).

Belongs to the FKBP-type PPIase family. Tig subfamily.

Its subcellular location is the cytoplasm. It catalyses the reaction [protein]-peptidylproline (omega=180) = [protein]-peptidylproline (omega=0). In terms of biological role, involved in protein export. Acts as a chaperone by maintaining the newly synthesized protein in an open conformation. Functions as a peptidyl-prolyl cis-trans isomerase. This chain is Trigger factor, found in Nitrosococcus oceani (strain ATCC 19707 / BCRC 17464 / JCM 30415 / NCIMB 11848 / C-107).